We begin with the raw amino-acid sequence, 540 residues long: NADH-ubiquinone oxidoreductase chain 4 (540 aa).

14 consecutive transmembrane segments (helical) span residues 2–22 (TIIA…GVIL), 35–55 (IFIL…LIGC), 89–109 (ISAI…LISI), 118–138 (QKFQ…FAAT), 140–160 (LVQL…MIGV), 172–192 (FQIL…IGIL), 218–238 (LIFI…PLHL), 248–268 (PTAG…YGYI), 282–302 (YFPI…IATL), 310–330 (IVAY…FSGV), 338–358 (IILM…IGVI), 376–396 (VMPI…AFPI), 415–435 (IIIA…SFWL), and 501–521 (VNIF…IIGM).

The protein belongs to the complex I subunit 4 family.

The protein resides in the mitochondrion membrane. The catalysed reaction is a ubiquinone + NADH + 5 H(+)(in) = a ubiquinol + NAD(+) + 4 H(+)(out). Core subunit of the mitochondrial membrane respiratory chain NADH dehydrogenase (Complex I) that is believed to belong to the minimal assembly required for catalysis. Complex I functions in the transfer of electrons from NADH to the respiratory chain. The immediate electron acceptor for the enzyme is believed to be ubiquinone. This is NADH-ubiquinone oxidoreductase chain 4 (nad4) from Dictyostelium discoideum (Social amoeba).